A 121-amino-acid chain; its full sequence is Small ribosomal subunit protein uS13 (121 aa).

The disordered stretch occupies residues 92 to 121 (RKGLPVRGQSSKTNARTVKGPRKTVANKKK). A compositionally biased stretch (basic residues) spans 110–121 (KGPRKTVANKKK).

Belongs to the universal ribosomal protein uS13 family. As to quaternary structure, part of the 30S ribosomal subunit. Forms a loose heterodimer with protein S19. Forms two bridges to the 50S subunit in the 70S ribosome.

Its function is as follows. Located at the top of the head of the 30S subunit, it contacts several helices of the 16S rRNA. In the 70S ribosome it contacts the 23S rRNA (bridge B1a) and protein L5 of the 50S subunit (bridge B1b), connecting the 2 subunits; these bridges are implicated in subunit movement. Contacts the tRNAs in the A and P-sites. This is Small ribosomal subunit protein uS13 from Mycoplasma capricolum subsp. capricolum (strain California kid / ATCC 27343 / NCTC 10154).